Reading from the N-terminus, the 713-residue chain is Protein-glucosylgalactosylhydroxylysine glucosidase (713 aa).

An N-terminal signal peptide occupies residues 1-21; the sequence is MIINSQEYLQPPQWWNERVEA. Asn-104, Asn-160, Asn-171, Asn-186, and Asn-283 each carry an N-linked (GlcNAc...) asparagine glycan. Residue 317-318 participates in substrate binding; it reads WD. Asn-361 is a glycosylation site (N-linked (GlcNAc...) asparagine). The active-site Proton donor is Glu-451. Residues Asn-457 and Asn-481 are each glycosylated (N-linked (GlcNAc...) asparagine). 521–522 is a binding site for substrate; sequence KQ. Asn-535, Asn-576, and Asn-662 each carry an N-linked (GlcNAc...) asparagine glycan.

It belongs to the glycosyl hydrolase 65 family.

The protein resides in the secreted. It catalyses the reaction (5R)-5-O-[alpha-D-glucosyl-(1-&gt;2)-beta-D-galactosyl]-5-hydroxy-L-lysyl-[collagen] + H2O = (5R)-5-O-(beta-D-galactosyl)-5-hydroxy-L-lysyl-[collagen] + D-glucose. Catalyzes the hydrolysis of glucose from the disaccharide unit linked to hydroxylysine residues of collagen and collagen-like proteins. This is Protein-glucosylgalactosylhydroxylysine glucosidase from Dictyostelium discoideum (Social amoeba).